We begin with the raw amino-acid sequence, 426 residues long: MDLRIGGKYRISRKIGGGSFGEIYLGTNISTNEEVAIKLEPAKAIHPQLLFESKLYKIFQGGIGIPAVKWFGFDGDYNIMVMDLLGPSLEDLFNYCGRKFSLKTVLMLGDQMLRRIEFIHSNNFIHRDIKPDNFLMGIGKRGHVVNLIDFGLAKRYRDPKTHQHIPYREHKNLTGTARYASLNTHQGIEQSRRDDLESLGYVLMYFNRGSLPWQGLKAYTKRDKYEKICDKKAQTKIDTLCQGFPSEFATFLNYTRFLKFEDKPDFLYLRKLLREMFVREGYRYDYMFDWVIVRKLREKPPLERPLSNDNKQIQQQIQQQQQAQQQLQQQAQQQQQQTTTTTTTSSSQPSNVKNISTVSNIATTTTDEQFRQLLSTPSYNNVDSDQSPQQTTTTTSSSNPNQTTFYRQNKVVVPQSSSTTTKPPAK.

The 270-residue stretch at 9–278 (YRISRKIGGG…LRKLLREMFV (270 aa)) folds into the Protein kinase domain. ATP contacts are provided by residues 15–23 (IGGGSFGEI) and lysine 38. The Proton acceptor role is filled by aspartate 128. 2 disordered regions span residues 340–360 (TTTTTSSSQPSNVKNISTVSN) and 377–426 (PSYN…PPAK). Over residues 345 to 360 (SSSQPSNVKNISTVSN) the composition is skewed to polar residues. The segment covering 386–404 (QSPQQTTTTTSSSNPNQTT) has biased composition (low complexity). Positions 414-426 (PQSSSTTTKPPAK) are enriched in polar residues.

It belongs to the protein kinase superfamily. CK1 Ser/Thr protein kinase family. Casein kinase I subfamily. Monomer. Autophosphorylated.

It localises to the cytoplasm. The protein localises to the nucleus. The enzyme catalyses L-seryl-[protein] + ATP = O-phospho-L-seryl-[protein] + ADP + H(+). It catalyses the reaction L-threonyl-[protein] + ATP = O-phospho-L-threonyl-[protein] + ADP + H(+). Its function is as follows. Casein kinases are operationally defined by their preferential utilization of acidic proteins such as caseins as substrates. Can phosphorylate a large number of proteins. May have a role in DNA repair mechanism and support vegetative growth of the cells. In Dictyostelium discoideum (Social amoeba), this protein is Casein kinase I (cak1-1).